Here is a 143-residue protein sequence, read N- to C-terminus: Trypsin inhibitor CMc (143 aa).

The signal sequence occupies residues 1–24 (MASCSQHLLSAVAIFSVLAGVATA).

The protein belongs to the protease inhibitor I6 (cereal trypsin/alpha-amylase inhibitor) family. Endosperm.

The protein resides in the secreted. Trypsin inhibitor. No alpha-amylase inhibition detected. The protein is Trypsin inhibitor CMc (ITR2) of Hordeum vulgare (Barley).